The following is a 338-amino-acid chain: Lumican (338 aa).

The signal sequence occupies residues Met-1–Gly-18. Gln-19 is modified (pyrrolidone carboxylic acid). Residues Tyr-20, Tyr-21, Tyr-23, and Tyr-30 each carry the sulfotyrosine modification. Residues Phe-28–Pro-66 enclose the LRRNT domain. LRR repeat units lie at residues Gly-67–Asn-88, Asp-91–Lys-114, Gln-117–Lys-137, Ser-138–Val-159, Asn-160–Lys-181, Ser-185–Thr-205, Ser-206–Arg-227, and Gly-230–Ser-250. A glycan (N-linked (GlcNAc...) (keratan sulfate) asparagine) is linked at Asn-88. Asn-127 carries N-linked (GlcNAc...) (keratan sulfate) asparagine glycosylation. Asn-160 is a glycosylation site (N-linked (GlcNAc...) (keratan sulfate) asparagine). N-linked (GlcNAc...) (keratan sulfate) asparagine glycosylation occurs at Asn-252. 2 LRR repeats span residues Ser-255 to Leu-276 and Glu-277 to Lys-296. Cys-295 and Cys-328 are disulfide-bonded. Ser-304 carries the phosphoserine modification. One copy of the LRR 11 repeat lies at Lys-305–Tyr-326.

Belongs to the small leucine-rich proteoglycan (SLRP) family. SLRP class II subfamily. As to quaternary structure, binds to laminin. Post-translationally, contains keratan sulfate.

Its subcellular location is the secreted. It localises to the extracellular space. It is found in the extracellular matrix. The polypeptide is Lumican (Lum) (Rattus norvegicus (Rat)).